The sequence spans 458 residues: UDP-N-acetylmuramoylalanine--D-glutamate ligase (458 aa).

124–130 provides a ligand contact to ATP; that stretch reads GSDGKTT.

It belongs to the MurCDEF family.

Its subcellular location is the cytoplasm. The catalysed reaction is UDP-N-acetyl-alpha-D-muramoyl-L-alanine + D-glutamate + ATP = UDP-N-acetyl-alpha-D-muramoyl-L-alanyl-D-glutamate + ADP + phosphate + H(+). The protein operates within cell wall biogenesis; peptidoglycan biosynthesis. Cell wall formation. Catalyzes the addition of glutamate to the nucleotide precursor UDP-N-acetylmuramoyl-L-alanine (UMA). In Clostridium perfringens (strain 13 / Type A), this protein is UDP-N-acetylmuramoylalanine--D-glutamate ligase.